The sequence spans 188 residues: Probable chorismate pyruvate-lyase (188 aa).

The substrate site is built by Arg-77, Leu-115, and Glu-174.

The protein belongs to the UbiC family.

It localises to the cytoplasm. It catalyses the reaction chorismate = 4-hydroxybenzoate + pyruvate. It functions in the pathway cofactor biosynthesis; ubiquinone biosynthesis. Removes the pyruvyl group from chorismate, with concomitant aromatization of the ring, to provide 4-hydroxybenzoate (4HB) for the ubiquinone pathway. In Shewanella loihica (strain ATCC BAA-1088 / PV-4), this protein is Probable chorismate pyruvate-lyase.